The following is a 357-amino-acid chain: MLSVQTTRAAKLQLGQLPSIAYTARSGRLHHQFYSTVAEKTANPTPNTSDKTNIFDIRTKVYDETDIRKHDDNQFITHPLFPHPTFSQEDCLKVGYEHRPPRTFGDKMAFRGIELVRGSFDFVTGYKKPKTQADIDSGFKGTRYEMTEGKWLTRCIFLESIAGVPGAVASFIRHLHSLRLLKRDKAWIETLLDEAFNERMHLLTFIKIGKPSWFTRTIIYVGQGVFCNLFFLFYLANPKYCHRFVGYLEEEAVSTYTHFVHELQSGKLPKFENIKIPTIAWQYWPELTENSSMLDLILRIRADEAKHREVNHTLANLDQRKDRNPFGLAIPDLKEPQPESGLKVTKPHGWEKEELKL.

Residues 152–172 (LTRCIFLESIAGVPGAVASFI) form a helical membrane-spanning segment. Residues glutamate 159, glutamate 198, and histidine 201 each coordinate Fe cation. A helical transmembrane segment spans residues 218 to 238 (IIYVGQGVFCNLFFLFYLANP). 3 residues coordinate Fe cation: glutamate 249, glutamate 304, and histidine 307. The segment at 330–357 (IPDLKEPQPESGLKVTKPHGWEKEELKL) is disordered. Positions 348–357 (HGWEKEELKL) are enriched in basic and acidic residues.

It belongs to the alternative oxidase family. It depends on Fe cation as a cofactor.

It localises to the mitochondrion inner membrane. Catalyzes cyanide-resistant oxygen consumption. May increase respiration when the cytochrome respiratory pathway is restricted, or in response to low temperatures. In Scheffersomyces stipitis (strain ATCC 58785 / CBS 6054 / NBRC 10063 / NRRL Y-11545) (Yeast), this protein is Alternative oxidase, mitochondrial (STO1).